The chain runs to 230 residues: ATP synthase subunit a (230 aa).

Helical transmembrane passes span 17 to 37, 78 to 98, 107 to 127, 165 to 187, and 198 to 218; these read LPITQSVLTTWFIMISLFIMA, IFPFVATLWIFILVSNLIGVI, DLSVTASLAMMTFLSVHWFGI, LFGNIMSLQLTALIVLMIAGFLV, and EAIIQAYIFGMLALIYIAGGI.

The protein belongs to the ATPase A chain family. In terms of assembly, F-type ATPases have 2 components, CF(1) - the catalytic core - and CF(0) - the membrane proton channel. CF(1) has five subunits: alpha(3), beta(3), gamma(1), delta(1), epsilon(1). CF(0) has three main subunits: a(1), b(2) and c(9-12). The alpha and beta chains form an alternating ring which encloses part of the gamma chain. CF(1) is attached to CF(0) by a central stalk formed by the gamma and epsilon chains, while a peripheral stalk is formed by the delta and b chains.

The protein localises to the cell inner membrane. In terms of biological role, key component of the proton channel; it plays a direct role in the translocation of protons across the membrane. The protein is ATP synthase subunit a of Legionella pneumophila (strain Corby).